A 105-amino-acid polypeptide reads, in one-letter code: uncharacterized protein (105 aa).

Positions 81-105 (NNNNKTITVDNNNNNNNNNNNNNNK) are disordered.

This is an uncharacterized protein from Dictyostelium discoideum (Social amoeba).